A 323-amino-acid polypeptide reads, in one-letter code: Cell division protein ZipA (323 aa).

The Periplasmic portion of the chain corresponds to Met1–Asn4. A helical membrane pass occupies residues Thr5–Ala25. Residues Asn26–Arg323 lie on the Cytoplasmic side of the membrane. Residues Ser44 to Ser73 are disordered.

Belongs to the ZipA family. Interacts with FtsZ via their C-terminal domains.

It is found in the cell inner membrane. Essential cell division protein that stabilizes the FtsZ protofilaments by cross-linking them and that serves as a cytoplasmic membrane anchor for the Z ring. Also required for the recruitment to the septal ring of downstream cell division proteins. The chain is Cell division protein ZipA from Pasteurella multocida (strain Pm70).